The sequence spans 165 residues: Ribosome maturation factor RimM (165 aa).

In terms of domain architecture, PRC barrel spans glutamate 94–valine 165.

Belongs to the RimM family. Binds ribosomal protein uS19.

The protein localises to the cytoplasm. Functionally, an accessory protein needed during the final step in the assembly of 30S ribosomal subunit, possibly for assembly of the head region. Essential for efficient processing of 16S rRNA. May be needed both before and after RbfA during the maturation of 16S rRNA. It has affinity for free ribosomal 30S subunits but not for 70S ribosomes. This Rickettsia typhi (strain ATCC VR-144 / Wilmington) protein is Ribosome maturation factor RimM.